A 428-amino-acid chain; its full sequence is Histidine--tRNA ligase (428 aa).

Belongs to the class-II aminoacyl-tRNA synthetase family. Homodimer.

Its subcellular location is the cytoplasm. The catalysed reaction is tRNA(His) + L-histidine + ATP = L-histidyl-tRNA(His) + AMP + diphosphate + H(+). The chain is Histidine--tRNA ligase from Sorangium cellulosum (strain So ce56) (Polyangium cellulosum (strain So ce56)).